Reading from the N-terminus, the 333-residue chain is Tetraacyldisaccharide 4'-kinase (333 aa).

60–67 (TVGGTGKT) contacts ATP.

Belongs to the LpxK family.

The enzyme catalyses a lipid A disaccharide + ATP = a lipid IVA + ADP + H(+). It participates in glycolipid biosynthesis; lipid IV(A) biosynthesis; lipid IV(A) from (3R)-3-hydroxytetradecanoyl-[acyl-carrier-protein] and UDP-N-acetyl-alpha-D-glucosamine: step 6/6. In terms of biological role, transfers the gamma-phosphate of ATP to the 4'-position of a tetraacyldisaccharide 1-phosphate intermediate (termed DS-1-P) to form tetraacyldisaccharide 1,4'-bis-phosphate (lipid IVA). This chain is Tetraacyldisaccharide 4'-kinase, found in Pseudomonas putida (strain GB-1).